Here is a 377-residue protein sequence, read N- to C-terminus: Succinyl-diaminopimelate desuccinylase 2 (377 aa).

His62 provides a ligand contact to Zn(2+). Asp64 is a catalytic residue. Residue Asp95 coordinates Zn(2+). Residue Glu129 is the Proton acceptor of the active site. Glu130, Glu158, and His350 together coordinate Zn(2+).

It belongs to the peptidase M20A family. DapE subfamily. In terms of assembly, homodimer. Requires Zn(2+) as cofactor. Co(2+) serves as cofactor.

The enzyme catalyses N-succinyl-(2S,6S)-2,6-diaminopimelate + H2O = (2S,6S)-2,6-diaminopimelate + succinate. It participates in amino-acid biosynthesis; L-lysine biosynthesis via DAP pathway; LL-2,6-diaminopimelate from (S)-tetrahydrodipicolinate (succinylase route): step 3/3. In terms of biological role, catalyzes the hydrolysis of N-succinyl-L,L-diaminopimelic acid (SDAP), forming succinate and LL-2,6-diaminopimelate (DAP), an intermediate involved in the bacterial biosynthesis of lysine and meso-diaminopimelic acid, an essential component of bacterial cell walls. The chain is Succinyl-diaminopimelate desuccinylase 2 from Shewanella loihica (strain ATCC BAA-1088 / PV-4).